The primary structure comprises 579 residues: Proline--tRNA ligase (579 aa).

It belongs to the class-II aminoacyl-tRNA synthetase family. ProS type 1 subfamily. As to quaternary structure, homodimer.

Its subcellular location is the cytoplasm. The catalysed reaction is tRNA(Pro) + L-proline + ATP = L-prolyl-tRNA(Pro) + AMP + diphosphate. In terms of biological role, catalyzes the attachment of proline to tRNA(Pro) in a two-step reaction: proline is first activated by ATP to form Pro-AMP and then transferred to the acceptor end of tRNA(Pro). As ProRS can inadvertently accommodate and process non-cognate amino acids such as alanine and cysteine, to avoid such errors it has two additional distinct editing activities against alanine. One activity is designated as 'pretransfer' editing and involves the tRNA(Pro)-independent hydrolysis of activated Ala-AMP. The other activity is designated 'posttransfer' editing and involves deacylation of mischarged Ala-tRNA(Pro). The misacylated Cys-tRNA(Pro) is not edited by ProRS. The protein is Proline--tRNA ligase of Hamiltonella defensa subsp. Acyrthosiphon pisum (strain 5AT).